Here is a 379-residue protein sequence, read N- to C-terminus: Cytochrome b (379 aa).

4 helical membrane passes run 33–53 (FGSL…FLAM), 77–98 (WLIR…FIHV), 113–133 (WNIG…GYVL), and 178–198 (FFAF…VHLL). Heme b-binding residues include H83 and H97. 2 residues coordinate heme b: H182 and H196. H201 contacts a ubiquinone. 4 helical membrane passes run 226 to 246 (IKDL…ALFF), 288 to 308 (LGGV…PLLN), 320 to 340 (ITQT…WIGG), and 347 to 367 (FTMX…ILMP).

It belongs to the cytochrome b family. In terms of assembly, the cytochrome bc1 complex contains 11 subunits: 3 respiratory subunits (MT-CYB, CYC1 and UQCRFS1), 2 core proteins (UQCRC1 and UQCRC2) and 6 low-molecular weight proteins (UQCRH/QCR6, UQCRB/QCR7, UQCRQ/QCR8, UQCR10/QCR9, UQCR11/QCR10 and a cleavage product of UQCRFS1). This cytochrome bc1 complex then forms a dimer. Heme b serves as cofactor.

Its subcellular location is the mitochondrion inner membrane. Component of the ubiquinol-cytochrome c reductase complex (complex III or cytochrome b-c1 complex) that is part of the mitochondrial respiratory chain. The b-c1 complex mediates electron transfer from ubiquinol to cytochrome c. Contributes to the generation of a proton gradient across the mitochondrial membrane that is then used for ATP synthesis. This is Cytochrome b (MT-CYB) from Necromys amoenus (Pleasant bolo mouse).